Reading from the N-terminus, the 360-residue chain is Epoxide hydrolase 3 (360 aa).

Residues 22–42 (AFMWSLVFSVALVAAAVYGCI) form a helical membrane-spanning segment. D173 acts as the Nucleophile in catalysis. The active-site Proton donor is Y281. H337 acts as the Proton acceptor in catalysis.

This sequence belongs to the AB hydrolase superfamily. Epoxide hydrolase family.

The protein resides in the microsome membrane. It catalyses the reaction an epoxide + H2O = an ethanediol. The enzyme catalyses 9,10-epoxyoctadecanoate + H2O = 9,10-dihydroxyoctadecanoate. It carries out the reaction 9,10-epoxy-(12Z)-octadecenoate + H2O = 9,10-dihydroxy-(12Z)-octadecenoate. The catalysed reaction is 8,9-epoxy-(5Z,11Z,14Z)-eicosatrienoate + H2O = 8,9-dihydroxy-(5Z,11Z,14Z)-eicosatrienoate. It catalyses the reaction 11,12-epoxy-(5Z,8Z,14Z)-eicosatrienoate + H2O = 11,12-dihydroxy-(5Z,8Z,14Z)-eicosatrienoate. The enzyme catalyses 14,15-epoxy-(5Z,8Z,11Z)-eicosatrienoate + H2O = 14,15-dihydroxy-(5Z,8Z,11Z)-eicosatrienoate. Inhibited by 1-(1-acetylpiperidin-4-yl)-3-(4-(trifl uoromethoxy)phenyl)urea (TPAU), 1-cyclohexyl-3-dodecylurea (CDU), 12-(3-adamantan-1-yl-ureido)-dodecanoic acid (AUDA), 1-((3S, 5S, 7S)-adamantan-1-yl)-3-(5-(2-(2-ethoxyethoxy) ethoxy)pentyl)urea (AEPU) and to a lesser extent by 8-(3-((3S, 5S, 7S)-adamantan-1-yl)ureido) octanoic acid (AUOA). In terms of biological role, catalyzes the hydrolysis of epoxide-containing fatty acids. Active in vitro against epoxyeicosatrienoic acids (EETs) including 8,9-EET, 9,10-EET, 11,12-EET and 14,15-EET and leukotoxin. The polypeptide is Epoxide hydrolase 3 (EPHX3) (Homo sapiens (Human)).